The primary structure comprises 163 residues: Early nodulin-like protein 20 (163 aa).

A signal peptide spans 1–25; it reads MMGKYLWALVYVTVMILIIVVEVES. The Phytocyanin domain maps to 26–126; sequence SLHRVGGGRY…GMKLAITVLP (101 aa). N-linked (GlcNAc...) asparagine glycosylation is found at asparagine 42, asparagine 63, asparagine 73, asparagine 88, and asparagine 135. A disulfide bridge links cysteine 80 with cysteine 114. A lipid anchor (GPI-anchor amidated serine) is attached at serine 138. The propeptide at 139–163 is removed in mature form; sequence TTTPLIPPNAITAAILIFAFKALLL.

The protein belongs to the early nodulin-like (ENODL) family.

The protein resides in the cell membrane. Functionally, may act as a carbohydrate transporter. This Arabidopsis thaliana (Mouse-ear cress) protein is Early nodulin-like protein 20.